Reading from the N-terminus, the 168-residue chain is DNA-binding protein inhibitor ID-1 (168 aa).

In terms of domain architecture, bHLH spans 46–98 (LPALLDEQQVNVLLYDMNGCYSRLKELVPTLPQNRKVSKVEILQHVIDYIRDL). An interaction with IFI204 region spans residues 53-106 (QQVNVLLYDMNGCYSRLKELVPTLPQNRKVSKVEILQHVIDYIRDLQLELNSES). A Nuclear export signal motif is present at residues 91–104 (VIDYIRDLQLELNS).

In terms of assembly, heterodimer with other HLH proteins. Interacts with CLOCK and BMAL1. Interacts with COPS5, IFI204, GATA4 and NKX2-5. In terms of processing, polyubiquitinated; which is favored by Ifi204 and leads to proteasomal degradation.

It is found in the cytoplasm. Its subcellular location is the nucleus. In terms of biological role, transcriptional regulator (lacking a basic DNA binding domain) which negatively regulates the basic helix-loop-helix (bHLH) transcription factors by forming heterodimers and inhibiting their DNA binding and transcriptional activity. Implicated in regulating a variety of cellular processes, including cellular growth, senescence, differentiation, apoptosis, angiogenesis, and neoplastic transformation. Inhibits skeletal muscle and cardiac myocyte differentiation. Regulates the circadian clock by repressing the transcriptional activator activity of the CLOCK-BMAL1 heterodimer. This is DNA-binding protein inhibitor ID-1 (Id1) from Mus musculus (Mouse).